A 470-amino-acid polypeptide reads, in one-letter code: Sugar transporter ESL1 (470 aa).

Residues 10 to 16 (LEAGLLL) carry the Essential for the localization to the vacuole membrane motif. 12 consecutive transmembrane segments (helical) span residues 28-48 (ITAVVLFSTFVSVCGSFCFGC), 68-88 (VAQYSMFGSIMTFGGMIGAIF), 99-119 (KGTMWFAQIFCIFGWVAVALA), 130-150 (LSTGFAVGLLSYVIPVYIAEI), 157-177 (GAFVFANQLMQSCGLSLFYVI), 186-206 (LALIGLIPCALQVVTLFFIPE), 268-288 (VVIGVGLMLLQQLSGSSGLMY), 303-323 (IGSMILAVIMIPKALLGLILV), 332-352 (LLASTGGMCFFSLLLSFSFCF), 368-388 (IGVVGFISSFAVGMGGLPWII), 404-424 (LVTLANWSFGWIVAFAYNFML), and 430-450 (GTFLIFFTICGAGIVFIYAMV).

It belongs to the major facilitator superfamily. Sugar transporter (TC 2.A.1.1) family. As to expression, expressed in both shoots and roots. In roots, strongly expressed in pericycle and xylem parenchyma cells, and to a lesser extent in the root endodermis. In flowers, expressed in sepals.

It is found in the vacuole membrane. The protein resides in the vesicle. Sugar transporter. Transports monosaccharides across the vacuolar membrane independently from a proton gradient. May function coordinately with the vacuolar invertase to regulate osmotic pressure by affecting the accumulation of sugar in the cells under abiotic stress conditions. This is Sugar transporter ESL1 from Arabidopsis thaliana (Mouse-ear cress).